The sequence spans 348 residues: MSKQTLVLLYGGRSAEREVSVLSAESVMRAVNYDKFLVKTYFITQMGQFIKTQQFSEKPSESERLMTNETIELTQKIKPSDIYEEGAVVFPVLHGPMGEDGSIQGFLEVLRMPYIGTNVMSSSIAMDKITTKRVLESIGIPQVAYTVYIDGQDLEACLVETLARLTFPIFVKPANMGSSVGISKAQTKVELRKAIQLALTYDSRVLIEQGVIAREIEVGLLGNDKVKSTLPGEVIKDVDFYDYQAKYVDNKITMAIPADVDQSIVTEMRSYAEVAFKALGGCGLSRCDFFLTQDGQVYLNELNTMPGFTQWSMYPLLWENMGLAYPDLIEELVTLAQEIFDQRESHLI.

Residues 132–334 (KRVLESIGIP…YPDLIEELVT (203 aa)) form the ATP-grasp domain. An ATP-binding site is contributed by 162-217 (LARLTFPIFVKPANMGSSVGISKAQTKVELRKAIQLALTYDSRVLIEQGVIAREIE). 3 residues coordinate Mg(2+): Asp-288, Glu-301, and Asn-303.

It belongs to the D-alanine--D-alanine ligase family. Mg(2+) serves as cofactor. Requires Mn(2+) as cofactor.

Its subcellular location is the cytoplasm. The catalysed reaction is 2 D-alanine + ATP = D-alanyl-D-alanine + ADP + phosphate + H(+). Its pathway is cell wall biogenesis; peptidoglycan biosynthesis. Functionally, cell wall formation. This is D-alanine--D-alanine ligase from Streptococcus pyogenes serotype M4 (strain MGAS10750).